Reading from the N-terminus, the 233-residue chain is Large ribosomal subunit protein eL6z (233 aa).

Residues 175-195 are disordered; it reads EFFEAEKEEKKEIPQEKKEDQ.

This sequence belongs to the eukaryotic ribosomal protein eL6 family.

In Arabidopsis thaliana (Mouse-ear cress), this protein is Large ribosomal subunit protein eL6z (RPL6A).